A 1459-amino-acid chain; its full sequence is PPE family protein PPE34 (1459 aa).

It belongs to the mycobacterial PPE family. In terms of assembly, interacts with human TLR2.

Its subcellular location is the cell membrane. The protein resides in the secreted. It is found in the cell wall. The protein localises to the cell surface. In terms of biological role, facilitates a shift in the ensuing immunity toward the Th2 phenotype and could aid in immune evasion by mycobacteria. Interacts with human Toll-like receptor 2 (TLR2) and triggers functional maturation of human dendritic cells (DCs), leading to secretion of IL-4, IL-5 and IL-10 from CD4(+) T cells and induction of Th2 immune response. Maturation of DCs involves PI3K, ERK1/2, p38 MAPK and NF-kappa-B signaling pathways. In Mycobacterium tuberculosis (strain ATCC 25618 / H37Rv), this protein is PPE family protein PPE34.